The sequence spans 403 residues: Na(+)-translocating NADH-quinone reductase subunit B (403 aa).

Transmembrane regions (helical) follow at residues 56-76 (MMILVWLCTFPAMFFGMWNTG), 121-141 (AYFLPIYAVTFIVGGFWEVLF), 164-184 (LPPSIPLWQVAMGISFGVVIG), and 195-212 (FLNPALVGRAFLFFAYPA). FMN phosphoryl threonine is present on Thr230. The next 6 membrane-spanning stretches (helical) occupy residues 237 to 257 (AGGVEGVVSAGVSWMDAFLGI), 265 to 285 (TSTLAILIGGAVLLLTKIAAW), 287 to 307 (IVAGVMVGMVVLSSLFNLIGS), 312 to 332 (MFAMPWYWHLVAGGFAFGTLF), 348 to 368 (WAFGILIGVMVVLIRVVNPAF), and 371 to 391 (GMMLAILFGNLCAPLIDHFVV).

Belongs to the NqrB/RnfD family. As to quaternary structure, composed of six subunits; NqrA, NqrB, NqrC, NqrD, NqrE and NqrF. FMN is required as a cofactor.

Its subcellular location is the cell inner membrane. It carries out the reaction a ubiquinone + n Na(+)(in) + NADH + H(+) = a ubiquinol + n Na(+)(out) + NAD(+). NQR complex catalyzes the reduction of ubiquinone-1 to ubiquinol by two successive reactions, coupled with the transport of Na(+) ions from the cytoplasm to the periplasm. NqrA to NqrE are probably involved in the second step, the conversion of ubisemiquinone to ubiquinol. In Azotobacter vinelandii (strain DJ / ATCC BAA-1303), this protein is Na(+)-translocating NADH-quinone reductase subunit B.